Here is a 494-residue protein sequence, read N- to C-terminus: Glycerol kinase (494 aa).

Residue Thr13 coordinates ADP. ATP is bound by residues Thr13, Thr14, and Ser15. Thr13 is a binding site for sn-glycerol 3-phosphate. Residue Arg17 participates in ADP binding. Arg83, Glu84, Tyr135, and Asp244 together coordinate sn-glycerol 3-phosphate. Glycerol contacts are provided by Arg83, Glu84, Tyr135, Asp244, and Gln245. Positions 266 and 309 each coordinate ADP. Residues Thr266, Gly309, Gln313, and Gly410 each coordinate ATP. Gly410 and Asn414 together coordinate ADP.

The protein belongs to the FGGY kinase family.

The enzyme catalyses glycerol + ATP = sn-glycerol 3-phosphate + ADP + H(+). The protein operates within polyol metabolism; glycerol degradation via glycerol kinase pathway; sn-glycerol 3-phosphate from glycerol: step 1/1. With respect to regulation, inhibited by fructose 1,6-bisphosphate (FBP). Its function is as follows. Key enzyme in the regulation of glycerol uptake and metabolism. Catalyzes the phosphorylation of glycerol to yield sn-glycerol 3-phosphate. The protein is Glycerol kinase of Shewanella sp. (strain MR-4).